The primary structure comprises 434 residues: Angio-associated migratory cell protein (434 aa).

Positions 1–63 are disordered; it reads MESESESGAA…EEEEEEGNEE (63 aa). At Ser-20 the chain carries Phosphoserine. Over residues 39–62 the composition is skewed to acidic residues; that stretch reads DPDDLAQEMEDVDFEEEEEEEGNE. WD repeat units follow at residues 89-129, 132-171, 173-212, 214-254, 258-299, 315-354, 356-395, and 398-433; these read LHSA…LLFE, GHKDSVTCAGFSHDSTLVATGDMSGLLKVWQVDTKEEVWS, EAGDLEWMEWHPRAPVLLAGTADGNTWMWKVPNGDCKTFQ, PNCP…HVLK, GHQG…GVFR, SESNSVESLGFCSVMPLAAVGYLDGTLAIYDLATQTLRHQ, QHQSGIVQLLWEAGTAVVYTCSLDGIVRLWDARTGRLLTD, and GHTAEILDFALSKDASLVVTTSGDHKAKVFCVQRPD.

Expressed in metastatic melanoma, liver, skin, kidney, heart, lung, lymph node, skeletal muscle and brain, and also in A2058 melanoma cells and activated T-cells (at protein level). Expressed in blood vessels. Strongly expressed in endothelial cells, cytotrophoblasts, and poorly differentiated. colon adenocarcinoma cells found in lymphatics.

Its subcellular location is the cell membrane. The protein resides in the cytoplasm. In terms of biological role, plays a role in angiogenesis and cell migration. In smooth muscle cell migration, may act through the RhoA pathway. The sequence is that of Angio-associated migratory cell protein (AAMP) from Homo sapiens (Human).